A 532-amino-acid chain; its full sequence is Zinc finger protein 350 (532 aa).

The region spanning 8 to 79 (ITLEDVAVDF…EDGIHSGACS (72 aa)) is the KRAB domain. 8 consecutive C2H2-type zinc fingers follow at residues 206–228 (HVCSECGKAFIKKSWLTDHQVMH), 234–256 (HRCSLCEKAFSRKFMLTEHQRTH), 262–284 (YECPECGKAFLKKSRLNIHQKTH), 290–312 (YICSECGKGFIQKGNLIVHQRIH), 318–340 (YICNECGKGFIQKTCLIAHQRFH), 346–368 (FVCSECGKSCSQKSGLIKHQRIH), 374–396 (FECSECGKAFSTKQKLIVHQRTH), and 402–424 (YGCNECGKAFAYMSCLVKHKRIH). The span at 427 to 443 (EKQEAAKVENPPAERHS) shows a compositional bias: basic and acidic residues. A disordered region spans residues 427–465 (EKQEAAKVENPPAERHSSLHTSDVMQEKNSANGATTQVP). Residues 445-465 (LHTSDVMQEKNSANGATTQVP) are compositionally biased toward polar residues.

It belongs to the krueppel C2H2-type zinc-finger protein family. As to quaternary structure, interacts with BRCA1. Interacts with RNF11. Widely expressed.

Its subcellular location is the nucleus. It localises to the nucleus matrix. Its function is as follows. Transcriptional repressor. Binds to a specific sequence, 5'-GGGxxxCAGxxxTTT-3', within GADD45 intron 3. The protein is Zinc finger protein 350 (ZNF350) of Homo sapiens (Human).